The primary structure comprises 373 residues: Protein SENSITIVE TO PROTON RHIZOTOXICITY 2 (373 aa).

2 consecutive C2H2-type zinc fingers follow at residues 217 to 239 (HYCQ…MRAH) and 327 to 362 (KHCG…VPAH).

In terms of tissue distribution, expressed at low levels in roots (e.g. root tips and lateral roots), leaves (e.g. at the edge of mature leaves, possibly in hydathodes, and in vascular bundles), flowers (e.g. floral filaments), stems, siliques and cotyledons.

It localises to the nucleus. Probable transcription factor. Together with STOP1, plays a critical role in tolerance to major stress factors in acid soils such as proton H(+) and aluminum ion Al(3+). Required for the expression of genes in response to acidic stress (e.g. ALMT1 and MATE), and Al-activated citrate exudation. This is Protein SENSITIVE TO PROTON RHIZOTOXICITY 2 from Arabidopsis thaliana (Mouse-ear cress).